The following is a 287-amino-acid chain: tRNA selenocysteine 1-associated protein 1 (287 aa).

RRM domains follow at residues 3–86 and 96–175; these read ASLW…YVTY and YSLF…VAIP.

It belongs to the RRM TRSPAP family. As to quaternary structure, component of the tRNA(Sec) complex composed at least of EEFSEC, SECISBP2, SEPHS1, SEPSECS, TRNAU1AP and tRNA(Sec). Found in a complex with tRNA(Sec). Interacts with SEPSECS. Associates with mRNP and/or polysomes. Found in a complex with EEFSEC, SECISBP2, TRNAU1AP and tRNA(Sec).

It is found in the nucleus. It localises to the cytoplasm. Its function is as follows. Involved in the early steps of selenocysteine biosynthesis and tRNA(Sec) charging to the later steps resulting in the cotranslational incorporation of selenocysteine into selenoproteins. Stabilizes the SECISBP2, EEFSEC and tRNA(Sec) complex. May be involved in the methylation of tRNA(Sec). Enhances efficiency of selenoproteins synthesis. The sequence is that of tRNA selenocysteine 1-associated protein 1 (TRNAU1AP) from Pongo abelii (Sumatran orangutan).